Here is a 201-residue protein sequence, read N- to C-terminus: Small ribosomal subunit protein uS4 (201 aa).

In terms of domain architecture, S4 RNA-binding spans 93–156 (RRLDNMVYRL…KNLDIIKNAV (64 aa)).

It belongs to the universal ribosomal protein uS4 family. Part of the 30S ribosomal subunit. Contacts protein S5. The interaction surface between S4 and S5 is involved in control of translational fidelity.

One of the primary rRNA binding proteins, it binds directly to 16S rRNA where it nucleates assembly of the body of the 30S subunit. Functionally, with S5 and S12 plays an important role in translational accuracy. The polypeptide is Small ribosomal subunit protein uS4 (Limosilactobacillus reuteri subsp. reuteri (strain JCM 1112) (Lactobacillus reuteri)).